A 1179-amino-acid chain; its full sequence is DNA-directed RNA polymerase subunit beta (1179 aa).

It belongs to the RNA polymerase beta chain family. The RNAP catalytic core consists of 2 alpha, 1 beta, 1 beta' and 1 omega subunit. When a sigma factor is associated with the core the holoenzyme is formed, which can initiate transcription.

It carries out the reaction RNA(n) + a ribonucleoside 5'-triphosphate = RNA(n+1) + diphosphate. Its function is as follows. DNA-dependent RNA polymerase catalyzes the transcription of DNA into RNA using the four ribonucleoside triphosphates as substrates. The chain is DNA-directed RNA polymerase subunit beta from Oceanobacillus iheyensis (strain DSM 14371 / CIP 107618 / JCM 11309 / KCTC 3954 / HTE831).